Here is a 460-residue protein sequence, read N- to C-terminus: uncharacterized protein (460 aa).

Residues 8-66 (PVEKNEFIDVVFEDLTHDGAGVAKVKGYPIFVKNGLPGEEAQIKIIKVKKNFAFGRLMK) form the TRAM domain. Residues C79, C85, C88, and C166 each coordinate [4Fe-4S] cluster. S-adenosyl-L-methionine contacts are provided by Q290, Y319, E340, and D388. C415 serves as the catalytic Nucleophile.

The protein belongs to the class I-like SAM-binding methyltransferase superfamily. RNA M5U methyltransferase family.

This is an uncharacterized protein from Bacillus cereus (strain ATCC 10987 / NRS 248).